The sequence spans 753 residues: Small G protein signaling modulator 3 homolog (753 aa).

Positions 115-306 (GIPHSMRPQL…RIWDFFFYQG (192 aa)) constitute a Rab-GAP TBC domain. Positions 482–541 (SRRRRAKALLDFERHDDDELGFRKNDIITIISQKDEHCWVGELNGLRGWFPAKFVDILDE) constitute an SH3 domain. One can recognise an RUN domain in the interval 557–720 (GITDLIRGTL…FAFSLSPDWE (164 aa)).

This sequence belongs to the small G protein signaling modulator family.

The polypeptide is Small G protein signaling modulator 3 homolog (sgsm3) (Xenopus laevis (African clawed frog)).